Reading from the N-terminus, the 392-residue chain is Probable protein phosphatase 2C 22 (392 aa).

Positions 1–26 are disordered; that stretch reads MEETRGISDPENGSSSYGGKPPNPLS. The 268-residue stretch at 89–356 folds into the PPM-type phosphatase domain; the sequence is RSGAWSDIGS…DNVTAVVVCL (268 aa). Positions 133, 134, 304, and 347 each coordinate Mn(2+).

This sequence belongs to the PP2C family. It depends on Mg(2+) as a cofactor. Mn(2+) serves as cofactor.

The catalysed reaction is O-phospho-L-seryl-[protein] + H2O = L-seryl-[protein] + phosphate. It carries out the reaction O-phospho-L-threonyl-[protein] + H2O = L-threonyl-[protein] + phosphate. The protein is Probable protein phosphatase 2C 22 of Arabidopsis thaliana (Mouse-ear cress).